A 465-amino-acid chain; its full sequence is Cysteine--tRNA ligase (465 aa).

Cys27 provides a ligand contact to Zn(2+). Positions 29–39 (PTVYDDAHLGH) match the 'HIGH' region motif. Residues Cys207, His237, and Glu241 each contribute to the Zn(2+) site. Positions 269 to 273 (KMSKS) match the 'KMSKS' region motif. Residue Lys272 coordinates ATP.

Belongs to the class-I aminoacyl-tRNA synthetase family. Monomer. It depends on Zn(2+) as a cofactor.

It is found in the cytoplasm. It carries out the reaction tRNA(Cys) + L-cysteine + ATP = L-cysteinyl-tRNA(Cys) + AMP + diphosphate. In Helicobacter acinonychis (strain Sheeba), this protein is Cysteine--tRNA ligase.